The chain runs to 536 residues: MAEKRTGLAEDGAKSVYERLKNDRAPYETRAQNCAQYTIPSLFPKDSDNASTDYQTPWQAVGARGLNNLASKLMLALFPMQTWMRLTISEYEAKQLLSDPDGLAKVDEGLSMVERIIMNYIESNSYRVTLFEALKQLVVAGNVLLYLPEPEGSNYNPMKLYRLSSYVVQRDAFGNVLQMVTRDQIAFGALPEDIRKAVEGQGGEKKADETIDVYTHIYLDEDSGEYLRYEEVEGMEVQGSDGTYPKEACPYIPIRMVRLDGESYGRSYIEEYLGDLRSLENLQEAIVKMSMISSKVIGLVNPAGITQPRRLTKAQTGDFVTGRPEDISFLQLEKQADFTVAKAVSDAIEARLSFAFMLNSAVQRTGERVTAEEIRYVASELEDTLGGVYSILSQELQLPLVRVLLKQLQATQQIPELPKEAVEPTISTGLEAIGRGQDLDKLERCVTAWAALAPMRDDPDINLAMIKLRIANAIGIDTSGILLTEEQKQQKMAQQSMQMGMDNGAAALAQGMAAQATASPEAMAAAADSVGLQPGI.

Belongs to the podoviridae portal protein family. Homododecamer. Interacts with major capsid protein. Interacts with the tail tube protein gp11. Interacts with the terminase large subunit. Interacts with the internal virion protein gp14.

It is found in the virion. Forms the portal vertex of the capsid. This portal plays critical roles in head assembly, genome packaging, neck/tail attachment, and genome ejection. The portal protein multimerizes as a single ring-shaped homododecamer arranged around a central channel. This is Portal protein from Escherichia phage T7 (Bacteriophage T7).